Here is a 355-residue protein sequence, read N- to C-terminus: UDP-N-acetylglucosamine--N-acetylmuramyl-(pentapeptide) pyrophosphoryl-undecaprenol N-acetylglucosamine transferase (355 aa).

UDP-N-acetyl-alpha-D-glucosamine contacts are provided by residues 11–13 (TGG), asparagine 120, arginine 161, serine 188, and glutamine 280.

It belongs to the glycosyltransferase 28 family. MurG subfamily.

The protein localises to the cell inner membrane. The catalysed reaction is di-trans,octa-cis-undecaprenyl diphospho-N-acetyl-alpha-D-muramoyl-L-alanyl-D-glutamyl-meso-2,6-diaminopimeloyl-D-alanyl-D-alanine + UDP-N-acetyl-alpha-D-glucosamine = di-trans,octa-cis-undecaprenyl diphospho-[N-acetyl-alpha-D-glucosaminyl-(1-&gt;4)]-N-acetyl-alpha-D-muramoyl-L-alanyl-D-glutamyl-meso-2,6-diaminopimeloyl-D-alanyl-D-alanine + UDP + H(+). Its pathway is cell wall biogenesis; peptidoglycan biosynthesis. Its function is as follows. Cell wall formation. Catalyzes the transfer of a GlcNAc subunit on undecaprenyl-pyrophosphoryl-MurNAc-pentapeptide (lipid intermediate I) to form undecaprenyl-pyrophosphoryl-MurNAc-(pentapeptide)GlcNAc (lipid intermediate II). The chain is UDP-N-acetylglucosamine--N-acetylmuramyl-(pentapeptide) pyrophosphoryl-undecaprenol N-acetylglucosamine transferase from Prochlorococcus marinus (strain MIT 9211).